We begin with the raw amino-acid sequence, 896 residues long: Translation initiation factor IF-2 (896 aa).

The segment covering 93–219 has biased composition (basic and acidic residues); sequence VKRDPQEAER…RMAEENEKNW (127 aa). A disordered region spans residues 93 to 307; it reads VKRDPQEAER…GSALQQGFQK (215 aa). A compositionally biased stretch (basic residues) spans 256 to 271; the sequence is GRSRSSKAARPAKKGN. Over residues 272–285 the composition is skewed to basic and acidic residues; it reads KHAESKADREEARA. The 170-residue stretch at 395–564 folds into the tr-type G domain; that stretch reads PRAPVVTIMG…LLQAEVLELK (170 aa). The G1 stretch occupies residues 404-411; it reads GHVDHGKT. 404–411 contacts GTP; sequence GHVDHGKT. The segment at 429–433 is G2; that stretch reads GITQH. The tract at residues 450-453 is G3; sequence DTPG. Residues 450-454 and 504-507 each bind GTP; these read DTPGH and NKID. Residues 504–507 are G4; the sequence is NKID. The G5 stretch occupies residues 540-542; sequence SAK.

It belongs to the TRAFAC class translation factor GTPase superfamily. Classic translation factor GTPase family. IF-2 subfamily.

It is found in the cytoplasm. One of the essential components for the initiation of protein synthesis. Protects formylmethionyl-tRNA from spontaneous hydrolysis and promotes its binding to the 30S ribosomal subunits. Also involved in the hydrolysis of GTP during the formation of the 70S ribosomal complex. This Klebsiella pneumoniae (strain 342) protein is Translation initiation factor IF-2.